Consider the following 212-residue polypeptide: WAP four-disulfide core domain protein 1 (212 aa).

The N-terminal stretch at 1–26 (MGSCDRKALWALSFLLLLLGSSSVQG) is a signal peptide. The tract at residues 43-62 (EEVAATGSRQPHADRCPPPP) is disordered. The WAP domain maps to 51–100 (RQPHADRCPPPPRTLPPGACQATRCQSDSECPRHRRCCYNGCAYACLEAV). 4 disulfides stabilise this stretch: cysteine 58–cysteine 88, cysteine 70–cysteine 92, cysteine 75–cysteine 87, and cysteine 81–cysteine 96. The segment at 191–212 (EYPEGDSKYVAEPGKGQQRHFP) is disordered.

In terms of tissue distribution, vascular smooth muscle and prostate. Periacinar ring.

Its subcellular location is the secreted. Functionally, has growth inhibitory activity. In Rattus norvegicus (Rat), this protein is WAP four-disulfide core domain protein 1 (Wfdc1).